A 151-amino-acid polypeptide reads, in one-letter code: Small ribosomal subunit protein uS15 (151 aa).

Positions 1–20 (MARLHSGKRGSSGSTRPLRT) are disordered.

It belongs to the universal ribosomal protein uS15 family. As to quaternary structure, part of the 30S ribosomal subunit.

This is Small ribosomal subunit protein uS15 from Methanococcus maripaludis (strain DSM 14266 / JCM 13030 / NBRC 101832 / S2 / LL).